The chain runs to 70 residues: U-actitoxin-Avd11a (70 aa).

The region spanning 36-70 is the ShKT domain; it reads CNDYKSSSYCRSVGSRNECGIHKYRMYCRKTCGSC. Disulfide bonds link C36–C70, C45–C63, and C54–C67. Positions 58–59 are crucial for binding to potassium channels; that stretch reads KY.

The protein belongs to the sea anemone type 1 potassium channel toxin family. Type 1b subfamily.

It localises to the secreted. It is found in the nematocyst. Its function is as follows. Inhibits voltage-gated potassium channels (Kv1/KCNA). This is U-actitoxin-Avd11a from Anemonia viridis (Snakelocks anemone).